Consider the following 105-residue polypeptide: Small ribosomal subunit protein uS10 (105 aa).

It belongs to the universal ribosomal protein uS10 family. Part of the 30S ribosomal subunit.

In terms of biological role, involved in the binding of tRNA to the ribosomes. This is Small ribosomal subunit protein uS10 from Crocosphaera subtropica (strain ATCC 51142 / BH68) (Cyanothece sp. (strain ATCC 51142)).